Consider the following 854-residue polypeptide: Discoidin domain-containing receptor 2 (854 aa).

An N-terminal signal peptide occupies residues 1–21 (MIPIPRMPLVLLLLLLILGSA). Over 22–399 (KAQVNPAICR…MLKVDDSNTR (378 aa)) the chain is Extracellular. The 156-residue stretch at 30-185 (CRYPLGMSGG…VCMRVELYGC (156 aa)) folds into the F5/8 type C domain. Cystine bridges form between C30–C185 and C73–C177. N-linked (GlcNAc...) asparagine glycans are attached at residues N121, N213, N261, N280, and N372. A helical transmembrane segment spans residues 400-421 (ILIGCLVAIIFILLAIIVIILW). The Cytoplasmic portion of the chain corresponds to 422–854 (RQFWQKMLEK…HLLLLQQGAE (433 aa)). A disordered region spans residues 452 to 471 (SMFNNNRSSSPSEQESNSTY). Residues 455–469 (NNNRSSSPSEQESNS) are compositionally biased toward low complexity. A Phosphotyrosine; by SRC and autocatalysis modification is found at Y471. Positions 563–848 (LAFKEKLGEG…PSFQEIHLLL (286 aa)) constitute a Protein kinase domain. ATP-binding positions include 569-577 (LGEGQFGEV) and K608. D709 (proton acceptor) is an active-site residue. A phosphotyrosine; by SRC and autocatalysis mark is found at Y735, Y739, and Y740.

This sequence belongs to the protein kinase superfamily. Tyr protein kinase family. Insulin receptor subfamily. In terms of assembly, binds hydroxyproline-rich sequence motifs in fibrillar, glycosylated collagen, such as the GQOGVMGFO motif, where O stands for hydroxyproline. Interacts with SRC. Interacts (tyrosine phosphorylated) with SHC1. N-glycosylated. In terms of processing, tyrosine phosphorylated in response to collagen binding. Phosphorylated by SRC; this is required for activation and subsequent autophosphorylation on additional tyrosine residues. Widely expressed. Detected in lung, ovary, skin and in testis Leydig cells (at protein level). Widely expressed. Detected at high levels in heart, lung, skeletal muscle, central nervous system (CNS) and kidney, and at lower levels in brain and testis. Detected in chondrocytes in tibia growth plates of young mice.

Its subcellular location is the cell membrane. The enzyme catalyses L-tyrosyl-[protein] + ATP = O-phospho-L-tyrosyl-[protein] + ADP + H(+). Present in an inactive state in the absence of collagen binding and phosphorylation by SRC. Tyrosine phosphorylation enhances the affinity for ATP and the catalytic activity. In terms of biological role, tyrosine kinase that functions as a cell surface receptor for fibrillar collagen and regulates cell differentiation, remodeling of the extracellular matrix, cell migration and cell proliferation. Required for normal bone development. Regulates osteoblast differentiation and chondrocyte maturation via a signaling pathway that involves MAP kinases and leads to the activation of the transcription factor RUNX2. Regulates remodeling of the extracellular matrix by up-regulation of the collagenases MMP1, MMP2 and MMP13, and thereby facilitates cell migration and tumor cell invasion. Promotes fibroblast migration and proliferation, and thereby contributes to cutaneous wound healing. The sequence is that of Discoidin domain-containing receptor 2 (Ddr2) from Mus musculus (Mouse).